The sequence spans 246 residues: Protein-lysine N-methyltransferase EFM6 (246 aa).

Residues Trp51, 87 to 89 (GSG), Asp115, Trp143, and Ala169 each bind S-adenosyl-L-methionine.

The protein belongs to the class I-like SAM-binding methyltransferase superfamily. METTL21 family. EFM6 subfamily.

The protein resides in the cytoplasm. Functionally, S-adenosyl-L-methionine-dependent protein-lysine N-methyltransferase that methylates elongation factor 1-alpha (TEF1 and TEF2) at 'Lys-390'. This Saccharomyces cerevisiae (strain ATCC 204508 / S288c) (Baker's yeast) protein is Protein-lysine N-methyltransferase EFM6.